The following is a 141-amino-acid chain: MQLTSFTDYGLRALIYMASLPDGRMTSISEVTEVYGVSRNHMVKIINQLSRAGFVTAVRGKNGGIRLGKPANTICIGDVVRELEPLSLVNCSSEFCHITPACRLKQALSKAVQSFLKELDNYTLADLVEENQPLYKLLLVE.

In terms of domain architecture, HTH rrf2-type spans Q2–E129. Positions I28–R51 form a DNA-binding region, H-T-H motif. Residues C91, C96, and C102 each coordinate [2Fe-2S] cluster.

[2Fe-2S] cluster serves as cofactor.

Nitric oxide-sensitive repressor of genes involved in protecting the cell against nitrosative stress. May require iron for activity. The protein is HTH-type transcriptional repressor NsrR of Salmonella choleraesuis (strain SC-B67).